Consider the following 124-residue polypeptide: Ribonuclease pancreatic (124 aa).

The segment covering 1–13 (KETAAAKFERQHI) has biased composition (basic and acidic residues). The segment at 1-24 (KETAAAKFERQHIDSNPSSVSSSN) is disordered. Positions 7 and 10 each coordinate substrate. Residue histidine 12 is the Proton acceptor of the active site. A compositionally biased stretch (low complexity) spans 15 to 24 (SNPSSVSSSN). 4 disulfide bridges follow: cysteine 26–cysteine 84, cysteine 40–cysteine 95, cysteine 58–cysteine 110, and cysteine 65–cysteine 72. A glycan (N-linked (GlcNAc...) asparagine; partial) is linked at asparagine 34. Substrate is bound by residues 41 to 45 (KPVNT), lysine 66, and arginine 85. The active-site Proton donor is the histidine 119.

This sequence belongs to the pancreatic ribonuclease family. In terms of assembly, monomer. Interacts with and forms tight 1:1 complexes with RNH1. Dimerization of two such complexes may occur. Interaction with RNH1 inhibits this protein. Pancreas.

The protein resides in the secreted. The catalysed reaction is an [RNA] containing cytidine + H2O = an [RNA]-3'-cytidine-3'-phosphate + a 5'-hydroxy-ribonucleotide-3'-[RNA].. It catalyses the reaction an [RNA] containing uridine + H2O = an [RNA]-3'-uridine-3'-phosphate + a 5'-hydroxy-ribonucleotide-3'-[RNA].. Endonuclease that catalyzes the cleavage of RNA on the 3' side of pyrimidine nucleotides. Acts on single-stranded and double-stranded RNA. This Antilocapra americana (Pronghorn) protein is Ribonuclease pancreatic (RNASE1).